The primary structure comprises 178 residues: Oligoribonuclease (178 aa).

An Exonuclease domain is found at 7 to 168 (LIWIDLEMTG…DDIRESIAEL (162 aa)). Residue Tyr-128 is part of the active site.

It belongs to the oligoribonuclease family.

The protein resides in the cytoplasm. Its function is as follows. 3'-to-5' exoribonuclease specific for small oligoribonucleotides. This Pseudomonas syringae pv. tomato (strain ATCC BAA-871 / DC3000) protein is Oligoribonuclease.